The primary structure comprises 889 residues: MAELPQSRINERNITSEMRESFLDYAMSVIVARALPDVRDGLKPVHRRILYGLNEQGMTPDKSYKKSARIVGDVMGKYHPHGDSSIYEAMVRMAQDFSYRYPLVDGQGNFGSMDGDGAAAMRYTEARMTKITLELLRDINKDTIDFIDNYDGNEREPSVLPARFPNLLANGASGIAVGMATNIPPHNLTELINGVLSLSKNPDISIAELMEDIEGPDFPTAGLILGKSGIRRAYETGRGSIQMRSRAVIEERGGGRQRIVVTEIPFQVNKARMIEKIAELVRDKKIDGITDLRDETSLRTGVRVVIDVRKDANASVILNNLYKQTPLQTSFGVNMIALVNGRPKLINLKEALVHYLEHQKTVVRRRTQYNLRKAKDRAHILEGLRIALDHIDEIISTIRESDTDKVAMESLQQRFKLSEKQAQAILDMRLRRLTGLERDKIEAEYNELLNYISELEAILADEEVLLQLVRDELTEIRDRFGDDRRTEIQLGGFEDLEDEDLIPEEQIVITLSHNNYIKRLPVSTYRAQNRGGRGVQGMNTLEEDFVSQLVTLSTHDHVLFFTNKGRVYKLKGYEVPELSRQSKGIPVVNAIELENDEVISTMIAVKDLESEDNFLVFATKRGVVKRSALSNFSRINRNGKIAISFREDDELIAVRLTSGQEDILIGTSHASLIRFPESTLRPLGRTATGVKGITLREGDEVVGLDVAHANSVDEVLVVTENGYGKRTPVNDYRLSNRGGKGIKTATITERNGNVVCITTVTGEEDLMIVTNAGVIIRLDVADISQNGRAAQGVRLIRLGDDQFVSTVAKVKEDAEDETNEDEQSTSTVSEDGTEQQREAVVNDETPGNAIHTEVIDSEENDEDGRIEVRQDFMDRVEEDIQQSLDEDEE.

Residues 35 to 501 (LPDVRDGLKP…GFEDLEDEDL (467 aa)) enclose the Topo IIA-type catalytic domain. Tyr123 acts as the O-(5'-phospho-DNA)-tyrosine intermediate in catalysis. The GyrA-box signature appears at 528-534 (QNRGGRG). The segment at 811 to 889 (KEDAEDETNE…IQQSLDEDEE (79 aa)) is disordered. Residues 813 to 823 (DAEDETNEDEQ) are compositionally biased toward acidic residues. Basic and acidic residues predominate over residues 863–875 (DGRIEVRQDFMDR). The segment covering 876 to 889 (VEEDIQQSLDEDEE) has biased composition (acidic residues).

It belongs to the type II topoisomerase GyrA/ParC subunit family. Heterotetramer, composed of two GyrA and two GyrB chains. In the heterotetramer, GyrA contains the active site tyrosine that forms a transient covalent intermediate with DNA, while GyrB binds cofactors and catalyzes ATP hydrolysis.

It localises to the cytoplasm. The enzyme catalyses ATP-dependent breakage, passage and rejoining of double-stranded DNA.. Functionally, a type II topoisomerase that negatively supercoils closed circular double-stranded (ds) DNA in an ATP-dependent manner to modulate DNA topology and maintain chromosomes in an underwound state. Negative supercoiling favors strand separation, and DNA replication, transcription, recombination and repair, all of which involve strand separation. Also able to catalyze the interconversion of other topological isomers of dsDNA rings, including catenanes and knotted rings. Type II topoisomerases break and join 2 DNA strands simultaneously in an ATP-dependent manner. The chain is DNA gyrase subunit A from Staphylococcus aureus.